A 686-amino-acid chain; its full sequence is Glycine--tRNA ligase beta subunit (686 aa).

Positions 65–99 are disordered; sequence ALSEEKRGPSVERAKDENGEWSKAAQGFARGQGAT. The segment covering 67 to 84 has biased composition (basic and acidic residues); that stretch reads SEEKRGPSVERAKDENGE.

This sequence belongs to the class-II aminoacyl-tRNA synthetase family. Tetramer of two alpha and two beta subunits.

Its subcellular location is the cytoplasm. It catalyses the reaction tRNA(Gly) + glycine + ATP = glycyl-tRNA(Gly) + AMP + diphosphate. The chain is Glycine--tRNA ligase beta subunit from Leuconostoc citreum (strain KM20).